Reading from the N-terminus, the 92-residue chain is Small ribosomal subunit protein uS19c (92 aa).

Belongs to the universal ribosomal protein uS19 family.

The protein resides in the plastid. It localises to the chloroplast. Its function is as follows. Protein S19 forms a complex with S13 that binds strongly to the 16S ribosomal RNA. In Pisum sativum (Garden pea), this protein is Small ribosomal subunit protein uS19c (rps19).